We begin with the raw amino-acid sequence, 489 residues long: N-succinylglutamate 5-semialdehyde dehydrogenase (489 aa).

221-226 lines the NAD(+) pocket; sequence GSSGTG. Active-site residues include glutamate 244 and cysteine 278.

Belongs to the aldehyde dehydrogenase family. AstD subfamily.

It carries out the reaction N-succinyl-L-glutamate 5-semialdehyde + NAD(+) + H2O = N-succinyl-L-glutamate + NADH + 2 H(+). The protein operates within amino-acid degradation; L-arginine degradation via AST pathway; L-glutamate and succinate from L-arginine: step 4/5. Its function is as follows. Catalyzes the NAD-dependent reduction of succinylglutamate semialdehyde into succinylglutamate. This is N-succinylglutamate 5-semialdehyde dehydrogenase from Sorangium cellulosum (strain So ce56) (Polyangium cellulosum (strain So ce56)).